The following is a 489-amino-acid chain: MFS-type transporter MFS19 (489 aa).

A compositionally biased stretch (basic and acidic residues) spans 1 to 12 (MAHSTAGDRDPE). Positions 1–42 (MAHSTAGDRDPEVGSEQHSSIAQLHTESMSDPWGDSNSPENP) are disordered. Residues 16–41 (EQHSSIAQLHTESMSDPWGDSNSPEN) are compositionally biased toward polar residues. A helical transmembrane segment spans residues 52–72 (FHVAIVSIFTLTANLAATMFA). Residues asparagine 83 and asparagine 86 are each glycosylated (N-linked (GlcNAc...) asparagine). 11 consecutive transmembrane segments (helical) span residues 91 to 111 (AMTVSLYVLGFAFGPLLLAPL), 127 to 147 (VYIAFTVGCAFSTNVSMFLVF), 149 to 169 (FLCGCAASGPMSIGGGTVADI), 180 to 200 (ALFAMGPLLGPVLGPIIGGYV), 208 to 228 (WTFRIILIMSGIIGLATMFFM), 282 to 302 (PIVLLISLYTGVLFGLIFLLF), 321 to 341 (GLAYLGLGIGMFLGLVVFSIL), 361 to 381 (LILMKWFGPITPLGCFMYGWS), 388 to 408 (WIVPILGTSIIGFGSLFVVIP), 425 to 445 (ALAANLLVRSPFGAFLGLVAA), and 454 to 474 (GWGNSVLGFITLAFTPVPWLF).

It belongs to the major facilitator superfamily.

It localises to the cell membrane. MFS-type efflux pump involved in the modulation susceptibility to various compounds including cumyl hydroperoxide, potassium superoxide, many singlet oxygen-generating compounds (eosin Y, rose Bengal, hematoporphyrin, methylene blue, and cercosporin), and the cell wall biosynthesis inhibitor Congo red. Involved in oxidative stress tolerance, colonization, and lesion formation. This Alternaria alternata (Alternaria rot fungus) protein is MFS-type transporter MFS19.